We begin with the raw amino-acid sequence, 502 residues long: Cobyric acid synthase (502 aa).

The region spanning 260-433 (ILRVAVCAIP…WHGSLESDGF (174 aa)) is the GATase cobBQ-type domain. The Nucleophile role is filled by cysteine 341. The active site involves histidine 425.

This sequence belongs to the CobB/CobQ family. CobQ subfamily.

It functions in the pathway cofactor biosynthesis; adenosylcobalamin biosynthesis. Functionally, catalyzes amidations at positions B, D, E, and G on adenosylcobyrinic A,C-diamide. NH(2) groups are provided by glutamine, and one molecule of ATP is hydrogenolyzed for each amidation. The protein is Cobyric acid synthase of Streptomyces avermitilis (strain ATCC 31267 / DSM 46492 / JCM 5070 / NBRC 14893 / NCIMB 12804 / NRRL 8165 / MA-4680).